The primary structure comprises 511 residues: Glucans biosynthesis protein G (511 aa).

An N-terminal signal peptide occupies residues 1 to 22; the sequence is MMKMRWLGAAIMLTLYASSSWA.

The protein belongs to the OpgD/OpgG family.

It localises to the periplasm. It functions in the pathway glycan metabolism; osmoregulated periplasmic glucan (OPG) biosynthesis. Its function is as follows. Involved in the biosynthesis of osmoregulated periplasmic glucans (OPGs). This Salmonella paratyphi A (strain ATCC 9150 / SARB42) protein is Glucans biosynthesis protein G.